The following is a 210-amino-acid chain: UMP-CMP kinase 3 (210 aa).

34–39 (GSGKGT) is an ATP binding site. Residues 54–83 (SAGDLLRAEIKSGSENGTMIENMIKEGKIV) are NMP. Residues Arg60, 81 to 83 (KIV), and 108 to 111 (GFPR) contribute to the a ribonucleoside 5'-phosphate site. Asn115 contributes to the CMP binding site. The interval 146–154 (GRNQGRVDD) is LID. An ATP-binding site is contributed by Arg147. Positions 151 and 162 each coordinate a ribonucleoside 5'-phosphate. Lys190 is a binding site for ATP.

Belongs to the adenylate kinase family. UMP-CMP kinase subfamily. As to quaternary structure, monomer. Mg(2+) serves as cofactor.

The protein localises to the cytoplasm. It is found in the nucleus. The enzyme catalyses UMP + ATP = UDP + ADP. The catalysed reaction is CMP + ATP = CDP + ADP. It carries out the reaction dCMP + ATP = dCDP + ADP. In terms of biological role, catalyzes the phosphorylation of pyrimidine nucleoside monophosphates at the expense of ATP. Plays an important role in de novo pyrimidine nucleotide biosynthesis. Has preference for UMP and CMP as phosphate acceptors. The polypeptide is UMP-CMP kinase 3 (URA6) (Oryza sativa subsp. japonica (Rice)).